Consider the following 503-residue polypeptide: Lysine--tRNA ligase (503 aa).

Mg(2+) contacts are provided by glutamate 412 and glutamate 419.

This sequence belongs to the class-II aminoacyl-tRNA synthetase family. As to quaternary structure, homodimer. The cofactor is Mg(2+).

The protein localises to the cytoplasm. It carries out the reaction tRNA(Lys) + L-lysine + ATP = L-lysyl-tRNA(Lys) + AMP + diphosphate. The chain is Lysine--tRNA ligase from Idiomarina loihiensis (strain ATCC BAA-735 / DSM 15497 / L2-TR).